Consider the following 299-residue polypeptide: MVISVPATSANLGPGFDTLGLALKLHNTFSITPSKLSSIHISGEGEDRPKLRIDNVFIKIFNEILALHNYPMQPFKFSFHNAIPISRGLGSSSAVIVGAIVGAYHIMQKPINKSEILQLALSYENHPDNITPALYGGFNVSMLDSSLKTKEQVINVQALLPTDIKAVVVIPNVAISTKFSRRSLPKKYSTKDAVFNLSHACMLSAAFITHKWELLRVASQDRFHQELRMKNIPALFNVQKIALENGALLSTLSGSGSSFLNICYCDDSGNLAHILQKHFPKFRVIELEFDNIGATLIES.

84 to 94 (PISRGLGSSSA) lines the ATP pocket.

The protein belongs to the GHMP kinase family. Homoserine kinase subfamily.

Its subcellular location is the cytoplasm. It carries out the reaction L-homoserine + ATP = O-phospho-L-homoserine + ADP + H(+). It functions in the pathway amino-acid biosynthesis; L-threonine biosynthesis; L-threonine from L-aspartate: step 4/5. In terms of biological role, catalyzes the ATP-dependent phosphorylation of L-homoserine to L-homoserine phosphate. The sequence is that of Homoserine kinase from Helicobacter hepaticus (strain ATCC 51449 / 3B1).